A 401-amino-acid polypeptide reads, in one-letter code: Forkhead box protein H1 (401 aa).

Residues 32–57 (MGPRDNSQLRPPEAESLSKTPKRRKK) are disordered. A DNA-binding region (fork-head) is located at residues 64-163 (KPPYTYLAMI…QNTALCRRWQ (100 aa)). Positions 179 to 251 (VLHGQPYQPP…PSSSSETPLW (73 aa)) are disordered. Pro residues predominate over residues 185 to 195 (YQPPSPPPPPR). The span at 221 to 230 (GQSTAAQAGT) shows a compositional bias: polar residues. The segment at 307–390 (LWGQLPTSYL…VSHPRDLAAP (84 aa)) is SMAD-interaction domain (SID). Positions 311 to 315 (LPTSY) match the Fast/FoxH1 motif 1 (FM1) motif. Positions 321-327 (PNVVMPL) match the Fast/FoxH1 motif 2 (FM2) motif. An SMAD interaction motif (SIM) motif is present at residues 363 to 384 (LDSLFQGVPPNKSIYDVWVSHP).

Interacts with the MH2 domains of SMAD2 and SMAD3.

It localises to the nucleus. Transcriptional activator. Recognizes and binds to the DNA sequence 5'-TGT[GT][GT]ATT-3'. Required for induction of the goosecoid (GSC) promoter by TGF-beta or activin signaling. Forms a transcriptionally active complex containing FOXH1/SMAD2/SMAD4 on a site on the GSC promoter called TARE (TGF-beta/activin response element). This Mus musculus (Mouse) protein is Forkhead box protein H1 (Foxh1).